Consider the following 313-residue polypeptide: Porphobilinogen deaminase (313 aa).

An S-(dipyrrolylmethanemethyl)cysteine modification is found at Cys241.

This sequence belongs to the HMBS family. Monomer. It depends on dipyrromethane as a cofactor.

The catalysed reaction is 4 porphobilinogen + H2O = hydroxymethylbilane + 4 NH4(+). Its pathway is porphyrin-containing compound metabolism; protoporphyrin-IX biosynthesis; coproporphyrinogen-III from 5-aminolevulinate: step 2/4. It functions in the pathway porphyrin-containing compound metabolism; chlorophyll biosynthesis. Functionally, tetrapolymerization of the monopyrrole PBG into the hydroxymethylbilane pre-uroporphyrinogen in several discrete steps. This Chlorobium limicola (strain DSM 245 / NBRC 103803 / 6330) protein is Porphobilinogen deaminase.